Reading from the N-terminus, the 237-residue chain is Uridylate kinase (237 aa).

12–15 provides a ligand contact to ATP; sequence KISG. G54 contacts UMP. 2 residues coordinate ATP: G55 and R59. UMP-binding positions include D72 and 133-140; that span reads TGNPFFST. Residues Y166 and D169 each coordinate ATP.

This sequence belongs to the UMP kinase family. As to quaternary structure, homohexamer.

It is found in the cytoplasm. The enzyme catalyses UMP + ATP = UDP + ADP. It participates in pyrimidine metabolism; CTP biosynthesis via de novo pathway; UDP from UMP (UMPK route): step 1/1. Inhibited by UTP. Functionally, catalyzes the reversible phosphorylation of UMP to UDP. The sequence is that of Uridylate kinase from Caldanaerobacter subterraneus subsp. tengcongensis (strain DSM 15242 / JCM 11007 / NBRC 100824 / MB4) (Thermoanaerobacter tengcongensis).